The primary structure comprises 365 residues: Heat-inducible transcription repressor HrcA (365 aa).

Belongs to the HrcA family.

Negative regulator of class I heat shock genes (grpE-dnaK-dnaJ and groELS operons). Prevents heat-shock induction of these operons. In Trichormus variabilis (strain ATCC 29413 / PCC 7937) (Anabaena variabilis), this protein is Heat-inducible transcription repressor HrcA.